Here is a 1294-residue protein sequence, read N- to C-terminus: ATPase PglY (1294 aa).

The segment at 1205-1263 (TQAAATPPPAPAASQPTAGDLSLDTPTSDPRIPYTSQETPTSSGGAGTARTSGGRRTTA) is disordered. Polar residues predominate over residues 1228–1244 (DTPTSDPRIPYTSQETP). The span at 1252-1263 (TARTSGGRRTTA) shows a compositional bias: low complexity.

BREX systems (bacteriophage exclusion) provide immunity against bacteriophage. Part of a type 2 BREX system. Previously called the phage growth limitation (Pgl) system, it confers protection against bacteriophage phiC31. The bacteria allows one cycle of phage infection, but subsequent cycles are impaired, protecting the original bacterial colony. The system undergoes high rates (10(-3) to 10(-4)) of phase reversion, i.e. loss and regain of phiC31 resistance. When the pglW-pglX-pglY-pglZ genes are transformed into a susceptible S.lividans (strain 1326) they confer resistance to infection by phage phiC31 and phiBT1; all 4 genes are necessary. In terms of biological role, hydrolyzes ATP but not AMP, ADP, GMP, GDP or GTP; activity is inhibited by the non-hydrolyzable ATP analog 5-adenylyl beta,gamma-imidodiphosphate. In Streptomyces coelicolor (strain ATCC BAA-471 / A3(2) / M145), this protein is ATPase PglY.